A 324-amino-acid chain; its full sequence is Probable UDP-sugar transporter protein SLC35A4 (324 aa).

Residues Met-1 to Arg-18 are Cytoplasmic-facing. The chain crosses the membrane as a helical span at residues Trp-19 to Leu-39. Over Cys-40 to Ser-52 the chain is Lumenal. The helical transmembrane segment at Ala-53–Trp-73 threads the bilayer. The Cytoplasmic segment spans residues Gln-74 to Gln-85. Residues Ala-86–Leu-106 form a helical membrane-spanning segment. The Lumenal segment spans residues Gln-107 to Gln-142. A helical transmembrane segment spans residues Gly-143–Val-163. Residues Pro-164–Met-180 lie on the Cytoplasmic side of the membrane. The helical transmembrane segment at Pro-181–Leu-201 threads the bilayer. Residues Ser-202 to Arg-214 are Lumenal-facing. Residues Leu-215–Leu-235 form a helical membrane-spanning segment. The Cytoplasmic portion of the chain corresponds to His-236 to Ser-250. Residues Gly-251–Met-271 traverse the membrane as a helical segment. Residues Lys-272–Ser-275 are Lumenal-facing. The chain crosses the membrane as a helical span at residues Ser-276 to Leu-298. Residues Arg-299–Arg-324 lie on the Cytoplasmic side of the membrane.

This sequence belongs to the nucleotide-sugar transporter family. SLC35A subfamily. As to quaternary structure, found in a complex with SLC35A2 and SLC35A3.

It is found in the golgi apparatus membrane. It carries out the reaction CDP-L-ribitol(in) + CDP(out) = CDP-L-ribitol(out) + CDP(in). Functionally, mediates the transport of CDP-ribitol. Does not exhibit CMP-sialic acid, UDP-galactose and UDP-N-acetylglucosamine transport activity. This chain is Probable UDP-sugar transporter protein SLC35A4, found in Homo sapiens (Human).